The following is a 219-amino-acid chain: Exosomal polycystin-1-interacting protein (219 aa).

An N-terminal signal peptide occupies residues Met-1 to Ala-19. 5 N-linked (GlcNAc...) asparagine glycosylation sites follow: Asn-29, Asn-42, Asn-95, Asn-188, and Asn-210.

This sequence belongs to the EPCIP family. Homooligomer. Interacts with PKD1 (via the PKD repeats in the N-terminal extracellular region); the interaction is not dependent on N-glycosylation of either protein. In terms of processing, N-glycosylated. As to expression, detected in the kidney and in the endothelium of large blood vessels (at protein level).

It is found in the vesicle. The protein localises to the secreted. The protein resides in the extracellular exosome. Its function is as follows. Likely to be involved with PKD1 in the detection, sequestration and exocytosis of senescent mitochondria. The chain is Exosomal polycystin-1-interacting protein from Homo sapiens (Human).